The primary structure comprises 475 residues: Lactate utilization protein B (475 aa).

4Fe-4S ferredoxin-type domains follow at residues 304 to 334 (GTEFQPVLQCIRCAACVNVCPVYRHIGGHSY) and 353 to 382 (YDDYKELPYASSLCAACTEACPVKIPLHEL). Positions 313, 316, 319, 323, 366, 369, and 373 each coordinate [4Fe-4S] cluster.

The protein belongs to the LutB/YkgF family.

In terms of biological role, is involved in L-lactate degradation and allows cells to grow with lactate as the sole carbon source. Has probably a role as an electron transporter during oxidation of L-lactate. This is Lactate utilization protein B from Geobacillus sp. (strain WCH70).